The following is a 369-amino-acid chain: Ubiquinone biosynthesis protein COQ4, mitochondrial (369 aa).

A mitochondrion-targeting transit peptide spans 1-35 (MLTSQKVSRVLLHSSFLKTPVSTQSRSFVFTTIAT). Residues histidine 212, aspartate 213, histidine 216, and glutamate 228 each coordinate Zn(2+). Residues 329 to 360 (AAAAATVTQRQRQQQRATATAANATSASSANV) are compositionally biased toward low complexity. The segment at 329–369 (AAAAATVTQRQRQQQRATATAANATSASSANVKPSNTAGAM) is disordered.

This sequence belongs to the COQ4 family. Component of a multi-subunit COQ enzyme complex, composed of at least COQ3, COQ4, COQ5, COQ6, COQ7 and COQ9. The cofactor is Zn(2+).

The protein localises to the mitochondrion inner membrane. The enzyme catalyses a 4-hydroxy-3-methoxy-5-(all-trans-polyprenyl)benzoate + H(+) = a 2-methoxy-6-(all-trans-polyprenyl)phenol + CO2. It participates in cofactor biosynthesis; ubiquinone biosynthesis. Lyase that catalyzes the C1-decarboxylation of 4-hydroxy-3-methoxy-5-(all-trans-polyprenyl)benzoic acid into 2-methoxy-6-(all-trans-polyprenyl)phenol during ubiquinone biosynthesis. The polypeptide is Ubiquinone biosynthesis protein COQ4, mitochondrial (Lodderomyces elongisporus (strain ATCC 11503 / CBS 2605 / JCM 1781 / NBRC 1676 / NRRL YB-4239) (Yeast)).